Here is a 955-residue protein sequence, read N- to C-terminus: Glycine dehydrogenase (decarboxylating) (955 aa).

K702 carries the post-translational modification N6-(pyridoxal phosphate)lysine.

This sequence belongs to the GcvP family. In terms of assembly, the glycine cleavage system is composed of four proteins: P, T, L and H. The cofactor is pyridoxal 5'-phosphate.

It carries out the reaction N(6)-[(R)-lipoyl]-L-lysyl-[glycine-cleavage complex H protein] + glycine + H(+) = N(6)-[(R)-S(8)-aminomethyldihydrolipoyl]-L-lysyl-[glycine-cleavage complex H protein] + CO2. Its function is as follows. The glycine cleavage system catalyzes the degradation of glycine. The P protein binds the alpha-amino group of glycine through its pyridoxal phosphate cofactor; CO(2) is released and the remaining methylamine moiety is then transferred to the lipoamide cofactor of the H protein. This chain is Glycine dehydrogenase (decarboxylating), found in Bradyrhizobium diazoefficiens (strain JCM 10833 / BCRC 13528 / IAM 13628 / NBRC 14792 / USDA 110).